The chain runs to 145 residues: MYQFLIIVILAAFVNGAQEKTECQQHRERETRSRAPLPLRLIPECDENGEYKPLQCFKDSKFCACWDKTGQPMTEPKQGIKACECIVQRETVQKIRGLIGAFTPQCEEDGKYSKMQCHGSTGHCWCVEQVSGRNVTAPVRGRLEC.

The signal sequence occupies residues 1-16 (MYQFLIIVILAAFVNG). Thyroglobulin type-1 domains follow at residues 20 to 73 (KTEC…GQPM) and 82 to 145 (ACEC…RLEC). 5 disulfide bridges follow: Cys-23-Cys-45, Cys-56-Cys-63, Cys-85-Cys-106, Cys-117-Cys-124, and Cys-126-Cys-145.

As to expression, expressed by the venom gland.

Its subcellular location is the secreted. Its function is as follows. Cysteine proteinase inhibitor. This Hadronyche infensa (Fraser island funnel-web spider) protein is U20-hexatoxin-Hi1a.